Consider the following 365-residue polypeptide: Succinyl-diaminopimelate desuccinylase (365 aa).

Residue His64 participates in Zn(2+) binding. The active site involves Asp66. Asp95 is a binding site for Zn(2+). The active-site Proton acceptor is the Glu125. Zn(2+) contacts are provided by Glu126, Glu154, and His339.

The protein belongs to the peptidase M20A family. DapE subfamily. As to quaternary structure, homodimer. Zn(2+) serves as cofactor. It depends on Co(2+) as a cofactor.

The catalysed reaction is N-succinyl-(2S,6S)-2,6-diaminopimelate + H2O = (2S,6S)-2,6-diaminopimelate + succinate. It functions in the pathway amino-acid biosynthesis; L-lysine biosynthesis via DAP pathway; LL-2,6-diaminopimelate from (S)-tetrahydrodipicolinate (succinylase route): step 3/3. Its function is as follows. Catalyzes the hydrolysis of N-succinyl-L,L-diaminopimelic acid (SDAP), forming succinate and LL-2,6-diaminopimelate (DAP), an intermediate involved in the bacterial biosynthesis of lysine and meso-diaminopimelic acid, an essential component of bacterial cell walls. This Campylobacter fetus subsp. fetus (strain 82-40) protein is Succinyl-diaminopimelate desuccinylase.